The chain runs to 403 residues: Argininosuccinate synthase (403 aa).

10 to 18 (AYSGGLDTS) provides a ligand contact to ATP. Tyr-87 is a binding site for L-citrulline. Residue Gly-117 participates in ATP binding. The L-aspartate site is built by Thr-119, Asn-123, and Asp-124. Asn-123 provides a ligand contact to L-citrulline. L-citrulline contacts are provided by Arg-127, Ser-175, Glu-260, and Tyr-272.

The protein belongs to the argininosuccinate synthase family. Type 1 subfamily. In terms of assembly, homotetramer.

The protein localises to the cytoplasm. It catalyses the reaction L-citrulline + L-aspartate + ATP = 2-(N(omega)-L-arginino)succinate + AMP + diphosphate + H(+). It participates in amino-acid biosynthesis; L-arginine biosynthesis; L-arginine from L-ornithine and carbamoyl phosphate: step 2/3. This Bacillus subtilis (strain 168) protein is Argininosuccinate synthase.